The primary structure comprises 358 residues: NADH-quinone oxidoreductase subunit H (358 aa).

The next 8 helical transmembrane spans lie at 20–40 (ITVGLVVSVIVKIVIILIPLI), 95–115 (ALFYIGPIMSLAPSFAAWAVI), 128–148 (IGLLYILMITSLSVYGVIIAG), 168–188 (ISYEIAMSAALVCVVMVSGSM), 206–226 (VFSWNWLPLFPIFIVYLISAV), 253–273 (GFAFALFFLAEYIFMILISAL), 290–310 (WGFIGTPSAFWMFVKMAAVLY), and 334–354 (VLIPIGFAYIVILGLWMISPL).

The protein belongs to the complex I subunit 1 family. NDH-1 is composed of 14 different subunits. Subunits NuoA, H, J, K, L, M, N constitute the membrane sector of the complex.

It localises to the cell inner membrane. It carries out the reaction a quinone + NADH + 5 H(+)(in) = a quinol + NAD(+) + 4 H(+)(out). NDH-1 shuttles electrons from NADH, via FMN and iron-sulfur (Fe-S) centers, to quinones in the respiratory chain. The immediate electron acceptor for the enzyme in this species is believed to be ubiquinone. Couples the redox reaction to proton translocation (for every two electrons transferred, four hydrogen ions are translocated across the cytoplasmic membrane), and thus conserves the redox energy in a proton gradient. This subunit may bind ubiquinone. The protein is NADH-quinone oxidoreductase subunit H of Neisseria meningitidis serogroup A / serotype 4A (strain DSM 15465 / Z2491).